Consider the following 177-residue polypeptide: Peptide methionine sulfoxide reductase MsrA (177 aa).

The active site involves cysteine 12.

The protein belongs to the MsrA Met sulfoxide reductase family.

The enzyme catalyses L-methionyl-[protein] + [thioredoxin]-disulfide + H2O = L-methionyl-(S)-S-oxide-[protein] + [thioredoxin]-dithiol. The catalysed reaction is [thioredoxin]-disulfide + L-methionine + H2O = L-methionine (S)-S-oxide + [thioredoxin]-dithiol. Functionally, has an important function as a repair enzyme for proteins that have been inactivated by oxidation. Catalyzes the reversible oxidation-reduction of methionine sulfoxide in proteins to methionine. In Halobacterium salinarum (strain ATCC 29341 / DSM 671 / R1), this protein is Peptide methionine sulfoxide reductase MsrA.